A 252-amino-acid polypeptide reads, in one-letter code: Adenosine 5'-phosphosulfate reductase (252 aa).

Residues Cys-125, Cys-126, Cys-208, and Cys-211 each coordinate [4Fe-4S] cluster. The segment at 219 to 252 (DGYSREGRWSDRDKTECGLHTSPEDEDGAHAAES) is disordered. The segment covering 221–235 (YSREGRWSDRDKTEC) has biased composition (basic and acidic residues). Residue Cys-235 is the Nucleophile; cysteine thiosulfonate intermediate of the active site.

The protein belongs to the PAPS reductase family. CysH subfamily. [4Fe-4S] cluster serves as cofactor.

It is found in the cytoplasm. The enzyme catalyses [thioredoxin]-disulfide + sulfite + AMP + 2 H(+) = adenosine 5'-phosphosulfate + [thioredoxin]-dithiol. It participates in sulfur metabolism; hydrogen sulfide biosynthesis; sulfite from sulfate. Functionally, catalyzes the formation of sulfite from adenosine 5'-phosphosulfate (APS) using thioredoxin as an electron donor. This is Adenosine 5'-phosphosulfate reductase from Salinibacter ruber (strain DSM 13855 / M31).